A 188-amino-acid polypeptide reads, in one-letter code: Guanylate kinase (188 aa).

Residues 8 to 188 (GRIVVLAGPS…AVAAISEILR (181 aa)) form the Guanylate kinase-like domain. Position 15–22 (15–22 (GPSAVGKS)) interacts with ATP.

The protein belongs to the guanylate kinase family.

It localises to the cytoplasm. It catalyses the reaction GMP + ATP = GDP + ADP. Essential for recycling GMP and indirectly, cGMP. In Corynebacterium jeikeium (strain K411), this protein is Guanylate kinase.